Here is a 379-residue protein sequence, read N- to C-terminus: AT-rich binding protein (379 aa).

A C2H2-type 1 zinc finger spans residues 29–52; it reads IVCHTCQEELQTQDQFWKHIQDEH. Basic and acidic residues predominate over residues 114 to 124; it reads EQREVELHEAH. 2 disordered regions span residues 114 to 148 and 221 to 267; these read EQRE…DAAK and PTAS…STTL. Composition is skewed to low complexity over residues 125–143, 223–242, and 249–262; these read QQQQ…QQQQ and ASFV…TTPP. 2 C2H2-type zinc fingers span residues 312–336 and 342–365; these read YICD…RVVH and FNCD…KKKH.

It is found in the nucleus. Its function is as follows. May be a transcription factor for genes having (A+T) stretches in their promoter and/or enhancer regions. Binds to AT rich DNA. This is AT-rich binding protein from Drosophila willistoni (Fruit fly).